Consider the following 107-residue polypeptide: Ornithine carbamoyltransferase, catabolic (107 aa).

Carbamoyl phosphate is bound by residues 57–61 (STRTR) and glutamine 84.

This sequence belongs to the aspartate/ornithine carbamoyltransferase superfamily. OTCase family.

Its subcellular location is the cytoplasm. The catalysed reaction is carbamoyl phosphate + L-ornithine = L-citrulline + phosphate + H(+). It participates in amino-acid degradation; L-arginine degradation via ADI pathway; carbamoyl phosphate from L-arginine: step 2/2. The chain is Ornithine carbamoyltransferase, catabolic (arcB) from Streptococcus pyogenes.